The primary structure comprises 773 residues: Molybdenum cofactor sulfurase (773 aa).

Lys243 is subject to N6-(pyridoxal phosphate)lysine. Cys410 is an active-site residue. Residues 632–773 form the MOSC domain; it reads LRLLRQSGQR…LSCGDTVLVE (142 aa). Ser731 carries the post-translational modification Phosphoserine.

It belongs to the class-V pyridoxal-phosphate-dependent aminotransferase family. MOCOS subfamily. Requires pyridoxal 5'-phosphate as cofactor.

It catalyses the reaction Mo-molybdopterin + L-cysteine + AH2 = thio-Mo-molybdopterin + L-alanine + A + H2O. It functions in the pathway cofactor biosynthesis; molybdopterin biosynthesis. Its function is as follows. Sulfurates the molybdenum cofactor. Sulfation of molybdenum is essential for xanthine dehydrogenase (XDH) and aldehyde oxidase (ADO) enzymes in which molybdenum cofactor is liganded by 1 oxygen and 1 sulfur atom in active form. The sequence is that of Molybdenum cofactor sulfurase from Drosophila ananassae (Fruit fly).